The primary structure comprises 156 residues: Arginine repressor (156 aa).

Belongs to the ArgR family.

The protein localises to the cytoplasm. The protein operates within amino-acid biosynthesis; L-arginine biosynthesis [regulation]. Functionally, regulates arginine biosynthesis genes. The protein is Arginine repressor of Shewanella piezotolerans (strain WP3 / JCM 13877).